A 635-amino-acid polypeptide reads, in one-letter code: Cationic amino acid transporter 4 (635 aa).

The next 3 membrane-spanning stretches (helical) occupy residues 42–62, 66–86, and 113–133; these read LTLL…TGAV, VAGP…LLAA, and LWAF…GAAV. N-linked (GlcNAc...) asparagine glycans are attached at residues Asn151 and Asn195. Residues 197-217 form a helical membrane-spanning segment; that stretch reads TFSAISLLVILFIVILGFILA. An N-linked (GlcNAc...) asparagine glycan is attached at Asn221. 5 helical membrane passes run 229–249, 270–290, 318–338, 365–385, and 391–411; these read FAPF…YAFV, LAIA…STVL, GFIV…SLLF, QVPV…ALLL, and VQFL…SIIV. 2 positions are modified to phosphoserine: Ser422 and Ser427. A helical membrane pass occupies residues 478–498; it reads VTWALGVMLASAITIGCVLVF. Asn500 is a glycosylation site (N-linked (GlcNAc...) asparagine). 3 consecutive transmembrane segments (helical) span residues 508–528, 539–559, and 567–587; these read WGYI…LLVL, LFQI…NICL, and TWVR…GYGI. A glycan (N-linked (GlcNAc...) asparagine) is linked at Asn601.

The protein belongs to the amino acid-polyamine-organocation (APC) superfamily. Cationic amino acid transporter (CAT) (TC 2.A.3.3) family.

Its subcellular location is the membrane. Functionally, involved in the transport of the cationic amino acids (arginine, lysine and ornithine). The sequence is that of Cationic amino acid transporter 4 (SLC7A4) from Homo sapiens (Human).